Here is a 605-residue protein sequence, read N- to C-terminus: Tyrosyl-DNA phosphodiesterase 1 (605 aa).

Positions 81–86 match the Nuclear localization signal motif; that stretch reads RKKVKP. Histidine 236 (nucleophile) is an active-site residue. Lysine 238 provides a ligand contact to substrate. An interaction with DNA region spans residues 379-382; it reads SLGS. Histidine 466 serves as the catalytic Proton donor/acceptor. Lysine 468 is a substrate binding site.

Belongs to the tyrosyl-DNA phosphodiesterase family. As to expression, ubiquitous, with a low level in roots.

The protein resides in the nucleus. Inhibited by vanadate analogs. Its function is as follows. DNA repair enzyme that can remove a variety of covalent adducts from DNA through hydrolysis of a 3'-phosphodiester bond, giving rise to DNA with a free 3' phosphate. Catalyzes the hydrolysis of dead-end complexes between DNA and the topoisomerase I active site tyrosine residue. This is Tyrosyl-DNA phosphodiesterase 1 from Arabidopsis thaliana (Mouse-ear cress).